A 647-amino-acid polypeptide reads, in one-letter code: MPLPAFVAAAARLAVLVAAAATAANAASYARYRRRHLRRIPSPIDESADPLADFRAFPSSDADDSEEDNFFFGLATAPAHVEDRLEDAWLQFATETSCDDNGNVRDQRPVDALMASAAGDGGSQQSWRSTGGENIGDREQRKPLRVAMEAMLRGFEILAESGESAGGDNCSHNVAAWHNVPCPQERLRFWSDPDAELKLAKETGISVFRMGVDWARLMPEEPTEELKSSVNFAALERYRWIIQRVREYGMKVMLTLFHHSLPPWAGKYGGWKMEKTVTYFMDFVRLVVDRVSNLVDYWVIFNEPHVFVMLTYCAGAWPGGDPNAIEVATSTLPTGVYNQALHWMAIAHSEAYDYIHSKSKNERKPIVGVAHHVSFTRPYGLFDVAAVALANSLTLFPYVDSICDKLDFIGINYYGQEVISGPGLKLVDNDEYSESGRGVYPDGLFRILIQFNERYKRLNIPFVITENGVSDETDLIRKPYILEHLLATYAAIIMGVRVLGYLFWTTSDNWEWADGYGPKFGLVAVDRANNLARKPRPSYFLFSRVVTTGKITRQDRMSAWRELQQAAVQKKTRPFFRAVDKHGRMYAGGLDRPIQRPFILRDWRFGHYKMEGLQDPLSCFIRCIFAPFSRQKKIHYIEDDVISYSIN.

Positions 116–140 (SAAGDGGSQQSWRSTGGENIGDREQ) are disordered. Residues 123–132 (SQQSWRSTGG) show a composition bias toward polar residues. The N-linked (GlcNAc...) asparagine glycan is linked to Asn-169. Residues His-258, 302–303 (NE), Tyr-414, Glu-466, Trp-504, 511–512 (EW), and Phe-520 each bind a beta-D-glucoside. The active-site Proton donor is the Glu-303. The active-site Nucleophile is the Glu-466.

The protein belongs to the glycosyl hydrolase 1 family.

The protein resides in the plastid. It localises to the chloroplast outer membrane. It catalyses the reaction 2 a 1,2-diacyl-3-O-(beta-D-galactosyl)-sn-glycerol = a 1,2-diacyl-3-O-[beta-D-galactosyl-(1-&gt;6)-beta-D-galactosyl]-sn-glycerol + a 1,2-diacyl-sn-glycerol. Galactosyltransferase synthesizing digalactosyldiacylglycerol from monogalactosyldiacylglycerol in the absence of UDP-galactose. Potentially involved in freezing tolerance. This Oryza sativa subsp. japonica (Rice) protein is Beta-glucosidase-like SFR2, chloroplastic.